Here is a 513-residue protein sequence, read N- to C-terminus: Activin receptor type-2B (513 aa).

The signal sequence occupies residues 1–18 (MTAPWAALALLWGSLCAG). The Extracellular segment spans residues 19-137 (SGRGEAETRE…PPPTAPTLLT (119 aa)). Disulfide bonds link C29–C59, C49–C77, C84–C103, C90–C102, and C104–C109. N42 and N65 each carry an N-linked (GlcNAc...) asparagine glycan. A helical transmembrane segment spans residues 138–158 (VLAYSLLPIGGLSLIVLLAFW). Topologically, residues 159–513 (MYRHRKPPYG…VDLLPKESSI (355 aa)) are cytoplasmic. Positions 190 to 481 (LQLLEIKARG…AGCVEERVSL (292 aa)) constitute a Protein kinase domain. Residues 196 to 204 (KARGRFGCV) and K217 each bind ATP. D322 functions as the Proton acceptor in the catalytic mechanism. An interaction with DYNLT1 region spans residues 492–513 (DCLVSLVTSVTNVDLLPKESSI).

It belongs to the protein kinase superfamily. TKL Ser/Thr protein kinase family. TGFB receptor subfamily. Forms an activin receptor complex with activin type II receptors such as ACVR1B. Interacts with VPS39. Interacts with DYNLT1. Interacts with BMP3. Interacts with BMP2. Mg(2+) is required as a cofactor. The cofactor is Mn(2+). Post-translationally, phosphorylated. Constitutive phosphorylation is in part catalyzed by its own kinase activity.

The protein resides in the cell membrane. The enzyme catalyses L-threonyl-[receptor-protein] + ATP = O-phospho-L-threonyl-[receptor-protein] + ADP + H(+). It carries out the reaction L-seryl-[receptor-protein] + ATP = O-phospho-L-seryl-[receptor-protein] + ADP + H(+). Its function is as follows. Transmembrane serine/threonine kinase activin type-2 receptor forming an activin receptor complex with activin type-1 serine/threonine kinase receptors (ACVR1, ACVR1B or ACVR1c). Transduces the activin signal from the cell surface to the cytoplasm and is thus regulating many physiological and pathological processes including neuronal differentiation and neuronal survival, hair follicle development and cycling, FSH production by the pituitary gland, wound healing, extracellular matrix production, immunosuppression and carcinogenesis. Activin is also thought to have a paracrine or autocrine role in follicular development in the ovary. Within the receptor complex, the type-2 receptors act as a primary activin receptors (binds activin-A/INHBA, activin-B/INHBB as well as inhibin-A/INHA-INHBA). The type-1 receptors like ACVR1B act as downstream transducers of activin signals. Activin binds to type-2 receptor at the plasma membrane and activates its serine-threonine kinase. The activated receptor type-2 then phosphorylates and activates the type-1 receptor. Once activated, the type-1 receptor binds and phosphorylates the SMAD proteins SMAD2 and SMAD3, on serine residues of the C-terminal tail. Soon after their association with the activin receptor and subsequent phosphorylation, SMAD2 and SMAD3 are released into the cytoplasm where they interact with the common partner SMAD4. This SMAD complex translocates into the nucleus where it mediates activin-induced transcription. Inhibitory SMAD7, which is recruited to ACVR1B through FKBP1A, can prevent the association of SMAD2 and SMAD3 with the activin receptor complex, thereby blocking the activin signal. Activin signal transduction is also antagonized by the binding to the receptor of inhibin-B via the IGSF1 inhibin coreceptor. The protein is Activin receptor type-2B (Acvr2b) of Rattus norvegicus (Rat).